The chain runs to 278 residues: Pyrroline-5-carboxylate reductase (278 aa).

The protein belongs to the pyrroline-5-carboxylate reductase family.

It is found in the cytoplasm. The enzyme catalyses L-proline + NADP(+) = (S)-1-pyrroline-5-carboxylate + NADPH + 2 H(+). The catalysed reaction is L-proline + NAD(+) = (S)-1-pyrroline-5-carboxylate + NADH + 2 H(+). It participates in amino-acid biosynthesis; L-proline biosynthesis; L-proline from L-glutamate 5-semialdehyde: step 1/1. This chain is Pyrroline-5-carboxylate reductase, found in Actinidia chinensis var. chinensis (Chinese soft-hair kiwi).